Reading from the N-terminus, the 161-residue chain is Ubiquitin-conjugating enzyme E2Q-like protein 1 (161 aa).

In terms of domain architecture, UBC core spans 1–154 (MKELQDIARL…VKTHEKYGWV (154 aa)). Residue C88 is the Glycyl thioester intermediate of the active site.

The protein belongs to the ubiquitin-conjugating enzyme family. As to quaternary structure, interacts with FBXW7.

It localises to the nucleus. The enzyme catalyses S-ubiquitinyl-[E1 ubiquitin-activating enzyme]-L-cysteine + [E2 ubiquitin-conjugating enzyme]-L-cysteine = [E1 ubiquitin-activating enzyme]-L-cysteine + S-ubiquitinyl-[E2 ubiquitin-conjugating enzyme]-L-cysteine.. It participates in protein modification; protein ubiquitination. In terms of biological role, probable E2 ubiquitin-protein ligase that catalyzes the covalent attachment of ubiquitin to target proteins. May facilitate the monoubiquitination and degradation of MTOR and CCNE1 through interaction with FBXW7. The sequence is that of Ubiquitin-conjugating enzyme E2Q-like protein 1 (UBE2QL1) from Homo sapiens (Human).